The following is a 188-amino-acid chain: M-phase phosphoprotein 6 homolog (188 aa).

Residues Glu-93 to Asn-188 are disordered. Basic and acidic residues predominate over residues Leu-120 to Glu-149. Phosphoserine is present on Ser-167. Residues Arg-174–Asn-188 show a composition bias toward basic residues.

Belongs to the MPP6 family. As to quaternary structure, associates with the RNA exosome complex.

It is found in the nucleus. Its function is as follows. RNA-binding protein that associates with the RNA exosome complex. The chain is M-phase phosphoprotein 6 homolog from Schizosaccharomyces pombe (strain 972 / ATCC 24843) (Fission yeast).